Reading from the N-terminus, the 109-residue chain is Aquaporin-2 (109 aa).

At 1–6 the chain is on the cytoplasmic side; that stretch reads SIAFSR. A helical membrane pass occupies residues 7–27; that stretch reads AVFSEFLATLLFVFFGLGSAL. Residues 28–35 are Extracellular-facing; sequence NWPQALPS. A helical membrane pass occupies residues 36–54; that stretch reads VLQIAMAFGLAIGTLVQTL. The Cytoplasmic segment spans residues 55–59; sequence GHISG. Positions 60–69 form an intramembrane region, discontinuously helical; it reads AHINPAVTVA. Positions 63-65 match the NPA 1 motif; the sequence is NPA. Residues 70-80 lie on the Cytoplasmic side of the membrane; that stretch reads CLVGCHVSFLR. The chain crosses the membrane as a helical span at residues 81-102; it reads ATFYVAAQLLGAVAGAALLHEL. The Extracellular portion of the chain corresponds to 103-109; that stretch reads TPPDIRG.

Belongs to the MIP/aquaporin (TC 1.A.8) family. Homotetramer. In terms of processing, serine phosphorylation is necessary and sufficient for expression at the apical membrane. Endocytosis is not phosphorylation-dependent. Post-translationally, N-glycosylated.

Its subcellular location is the apical cell membrane. The protein resides in the basolateral cell membrane. It is found in the cell membrane. The protein localises to the cytoplasmic vesicle membrane. It localises to the golgi apparatus. Its subcellular location is the trans-Golgi network membrane. It catalyses the reaction H2O(in) = H2O(out). The enzyme catalyses glycerol(in) = glycerol(out). In terms of biological role, forms a water-specific channel that provides the plasma membranes of renal collecting duct with high permeability to water, thereby permitting water to move in the direction of an osmotic gradient. Plays an essential role in renal water homeostasis. Could also be permeable to glycerol. The chain is Aquaporin-2 from Amblysomus hottentotus (Hottentot golden mole).